The primary structure comprises 229 residues: tRNA (guanine-N(7)-)-methyltransferase (229 aa).

Positions 59, 84, 111, and 134 each coordinate S-adenosyl-L-methionine. The active site involves D134. K138 lines the substrate pocket. The interval 140 to 145 is interaction with RNA; sequence KHNKRR. Substrate-binding positions include D170 and 207–210; that span reads TKFE.

Belongs to the class I-like SAM-binding methyltransferase superfamily. TrmB family.

It catalyses the reaction guanosine(46) in tRNA + S-adenosyl-L-methionine = N(7)-methylguanosine(46) in tRNA + S-adenosyl-L-homocysteine. The protein operates within tRNA modification; N(7)-methylguanine-tRNA biosynthesis. Its function is as follows. Catalyzes the formation of N(7)-methylguanine at position 46 (m7G46) in tRNA. This Saccharophagus degradans (strain 2-40 / ATCC 43961 / DSM 17024) protein is tRNA (guanine-N(7)-)-methyltransferase.